The chain runs to 37 residues: Photosystem I reaction center subunit IX (37 aa).

Residues 4-24 traverse the membrane as a helical segment; the sequence is FLSSAPVLLTAMMVFTAGLLI.

Belongs to the PsaJ family.

It is found in the cellular thylakoid membrane. May help in the organization of the PsaE and PsaF subunits. The protein is Photosystem I reaction center subunit IX of Picosynechococcus sp. (strain ATCC 27264 / PCC 7002 / PR-6) (Agmenellum quadruplicatum).